The primary structure comprises 311 residues: MSSYLDFEKSIKQIDDDIANARIKGDEHAVEILNKNLEKEVAKVYKNLNEYQRLQLARHPDRPYAIDYIRSFLMDAYEIHGDRAFRDDPAIVCYVGYIGGKKAMVIGEQKGRGTKNKLRRNFGMPHPEGYRKALRVAKLAEKFNLPILFLIDTPGAYPGVGAEERGQSEAIARNLFEFANLKVPTIAVVIGEGGSGGALAIGVADKLAMMKNSVFSVISPEGCAAILWNDPSKQEQATKAMKITADDLKNLKLIDDVIKEPINGAHRDKDGAAKELASYFVSKLEKLEKLSIDELVAKRIDKILSVGAYEE.

One can recognise a CoA carboxyltransferase C-terminal domain in the interval 36 to 286 (NLEKEVAKVY…ASYFVSKLEK (251 aa)).

The protein belongs to the AccA family. Acetyl-CoA carboxylase is a heterohexamer composed of biotin carboxyl carrier protein (AccB), biotin carboxylase (AccC) and two subunits each of ACCase subunit alpha (AccA) and ACCase subunit beta (AccD).

The protein resides in the cytoplasm. It catalyses the reaction N(6)-carboxybiotinyl-L-lysyl-[protein] + acetyl-CoA = N(6)-biotinyl-L-lysyl-[protein] + malonyl-CoA. The protein operates within lipid metabolism; malonyl-CoA biosynthesis; malonyl-CoA from acetyl-CoA: step 1/1. In terms of biological role, component of the acetyl coenzyme A carboxylase (ACC) complex. First, biotin carboxylase catalyzes the carboxylation of biotin on its carrier protein (BCCP) and then the CO(2) group is transferred by the carboxyltransferase to acetyl-CoA to form malonyl-CoA. The sequence is that of Acetyl-coenzyme A carboxylase carboxyl transferase subunit alpha from Campylobacter curvus (strain 525.92).